Consider the following 308-residue polypeptide: GTPase Era (308 aa).

Residues arginine 14–proline 181 form the Era-type G domain. The segment at glycine 22–serine 29 is G1. Glycine 22 to serine 29 is a binding site for GTP. A G2 region spans residues glutamine 48–alanine 52. Residues aspartate 69–glycine 72 are G3. Residues aspartate 69–isoleucine 73 and asparagine 131–aspartate 134 each bind GTP. A G4 region spans residues asparagine 131 to aspartate 134. Positions isoleucine 160–alanine 162 are G5. The region spanning leucine 212 to glutamate 289 is the KH type-2 domain.

It belongs to the TRAFAC class TrmE-Era-EngA-EngB-Septin-like GTPase superfamily. Era GTPase family. In terms of assembly, monomer.

It is found in the cytoplasm. The protein localises to the cell inner membrane. Its function is as follows. An essential GTPase that binds both GDP and GTP, with rapid nucleotide exchange. Plays a role in 16S rRNA processing and 30S ribosomal subunit biogenesis and possibly also in cell cycle regulation and energy metabolism. This is GTPase Era from Bradyrhizobium sp. (strain BTAi1 / ATCC BAA-1182).